Here is a 119-residue protein sequence, read N- to C-terminus: Small ribosomal subunit protein uS10 (119 aa).

The protein belongs to the universal ribosomal protein uS10 family. In terms of assembly, component of the small ribosomal subunit. Mature ribosomes consist of a small (40S) and a large (60S) subunit. The 40S subunit contains about 32 different proteins and 1 molecule of RNA (18S). The 60S subunit contains 45 different proteins and 3 molecules of RNA (25S, 5.8S and 5S).

The protein localises to the cytoplasm. Functionally, component of the ribosome, a large ribonucleoprotein complex responsible for the synthesis of proteins in the cell. The small ribosomal subunit (SSU) binds messenger RNAs (mRNAs) and translates the encoded message by selecting cognate aminoacyl-transfer RNA (tRNA) molecules. The large subunit (LSU) contains the ribosomal catalytic site termed the peptidyl transferase center (PTC), which catalyzes the formation of peptide bonds, thereby polymerizing the amino acids delivered by tRNAs into a polypeptide chain. The nascent polypeptides leave the ribosome through a tunnel in the LSU and interact with protein factors that function in enzymatic processing, targeting, and the membrane insertion of nascent chains at the exit of the ribosomal tunnel. The protein is Small ribosomal subunit protein uS10 (RPS20) of Candida albicans (strain SC5314 / ATCC MYA-2876) (Yeast).